A 250-amino-acid chain; its full sequence is MRIPWLEADTPFPPAEQALKEPNGLLAAGGELNTDRLRAAYAKGIFPWYSEGEPLLWWSPDPRMVLACADFAPSHSLRKTLRRLARAEQAGDTRIQVRVDTAFARVMAACAGRRDGQAGTWITPEVQAAYCAWHEQGQAHSIETWIDDHLVGGLYGISLGGMFFGESMFAHATDASKIALAYLVAFLTRHEVDWIDCQQQTRHLASLGARPLPRAQFLQHVARVLAKPAPPWRVGVLRHAGDIVDSANQR.

The protein belongs to the L/F-transferase family.

The protein resides in the cytoplasm. It catalyses the reaction N-terminal L-lysyl-[protein] + L-leucyl-tRNA(Leu) = N-terminal L-leucyl-L-lysyl-[protein] + tRNA(Leu) + H(+). The enzyme catalyses N-terminal L-arginyl-[protein] + L-leucyl-tRNA(Leu) = N-terminal L-leucyl-L-arginyl-[protein] + tRNA(Leu) + H(+). The catalysed reaction is L-phenylalanyl-tRNA(Phe) + an N-terminal L-alpha-aminoacyl-[protein] = an N-terminal L-phenylalanyl-L-alpha-aminoacyl-[protein] + tRNA(Phe). Functionally, functions in the N-end rule pathway of protein degradation where it conjugates Leu, Phe and, less efficiently, Met from aminoacyl-tRNAs to the N-termini of proteins containing an N-terminal arginine or lysine. The chain is Leucyl/phenylalanyl-tRNA--protein transferase from Bordetella avium (strain 197N).